Here is an 83-residue protein sequence, read N- to C-terminus: uncharacterized protein (83 aa).

2 helical membrane-spanning segments follow: residues 23–43 (GGCY…SAIA) and 49–69 (SLWW…VVYG).

It localises to the cell membrane. This is an uncharacterized protein from Mycobacterium tuberculosis (strain CDC 1551 / Oshkosh).